A 458-amino-acid polypeptide reads, in one-letter code: 5-hydroxytryptamine receptor 2C (458 aa).

An N-terminal signal peptide occupies residues 1-32 (MVNLRKAVHSFLVHLIGLLVWQCDISVSPVAA). Over 33 to 55 (LVTDIFNTSDGGRFKFPDGVQNW) the chain is Extracellular. The helical transmembrane segment at 56–80 (PALSIVIIIILTIGGNILVIMAVSL) threads the bilayer. Residues 81–86 (EKKLHN) are Cytoplasmic-facing. Residues 87-111 (ATNYFLMSLAIADMLVGLLVMPLSL) traverse the membrane as a helical segment. The Extracellular portion of the chain corresponds to 112–128 (LAILYDYVWPLPRYLCP). Cys-127 and Cys-207 are disulfide-bonded. The helical transmembrane segment at 129–151 (VWISLDVLFSTASIMHLCAISLD) threads the bilayer. Thr-139 is an ergotamine binding site. Positions 151–153 (DRY) match the DRY motif; important for ligand-induced conformation changes motif. The Cytoplasmic portion of the chain corresponds to 152–167 (RYVAIRNPVEHSRFNS). A helical membrane pass occupies residues 168–189 (RTKAIMKIAIVWAISIGVSVPI). Over 190-213 (PVIGLRDEEKVFVNNTTCVLNDPN) the chain is Extracellular. Asn-203 and Asn-204 each carry an N-linked (GlcNAc...) asparagine glycan. Leu-209 is a binding site for ergotamine. The helical transmembrane segment at 214–236 (FVLIGSFVAFFIPLTIMVITYCL) threads the bilayer. Residues 237 to 311 (TIHVLRRQAL…AINNERKASK (75 aa)) lie on the Cytoplasmic side of the membrane. A disordered region spans residues 272–301 (TEEENSANPNQDSNPRRRKKKERRPRGTMQ). Positions 287–297 (RRRKKKERRPR) are enriched in basic residues. The chain crosses the membrane as a helical span at residues 312 to 336 (VLGIVFFVFLVMWCPFFITNILSVL). Residues Cys-337 and Cys-341 are joined by a disulfide bond. The Extracellular portion of the chain corresponds to 337-347 (CGKACNQKLME). A helical membrane pass occupies residues 348–370 (KLLNVFVWIGYVCSGINPLVYTL). An NPxxY motif; important for ligand-induced conformation changes and signaling motif is present at residues 364–368 (NPLVY). The Cytoplasmic portion of the chain corresponds to 371 to 458 (FNKIYRRAFS…SVVSERISSV (88 aa)). A PDZ-binding motif is present at residues 456-458 (SSV).

Belongs to the G-protein coupled receptor 1 family. In terms of assembly, interacts with MPDZ. Interacts with ARRB2. Interacts with MPP3; this interaction stabilizes the receptor at the plasma membrane and prevents the desensitization of the HTR2C receptor-mediated calcium response.

Its subcellular location is the cell membrane. G-protein coupled receptor for 5-hydroxytryptamine (serotonin). Also functions as a receptor for various drugs and psychoactive substances, including ergot alkaloid derivatives, 1-2,5,-dimethoxy-4-iodophenyl-2-aminopropane (DOI) and lysergic acid diethylamide (LSD). Ligand binding causes a conformation change that triggers signaling via guanine nucleotide-binding proteins (G proteins) and modulates the activity of downstream effectors. HTR2C is coupled to G(q)/G(11) G alpha proteins and activates phospholipase C-beta, releasing diacylglycerol (DAG) and inositol 1,4,5-trisphosphate (IP3) second messengers that modulate the activity of phosphatidylinositol 3-kinase and promote the release of Ca(2+) ions from intracellular stores, respectively. Beta-arrestin family members inhibit signaling via G proteins and mediate activation of alternative signaling pathways. Regulates neuronal activity via the activation of short transient receptor potential calcium channels in the brain, and thereby modulates the activation of pro-opiomelanocortin neurons and the release of CRH that then regulates the release of corticosterone. Plays a role in the regulation of appetite and eating behavior, responses to anxiogenic stimuli and stress. Plays a role in insulin sensitivity and glucose homeostasis. This Canis lupus familiaris (Dog) protein is 5-hydroxytryptamine receptor 2C.